A 172-amino-acid polypeptide reads, in one-letter code: Translation initiation factor IF-3 (172 aa).

The protein belongs to the IF-3 family. In terms of assembly, monomer.

The protein localises to the cytoplasm. In terms of biological role, IF-3 binds to the 30S ribosomal subunit and shifts the equilibrium between 70S ribosomes and their 50S and 30S subunits in favor of the free subunits, thus enhancing the availability of 30S subunits on which protein synthesis initiation begins. This is Translation initiation factor IF-3 from Geobacillus stearothermophilus (Bacillus stearothermophilus).